The primary structure comprises 105 residues: MMNDTEFHKLVDHALMIIEEGIDESGADIESETTGNVLTLEFENRSQIVINRQEPLHELWLASKSGGYHFKYNNGEWHCTRSGEEFFALVKRECSVHAGETVDWS.

The protein belongs to the frataxin family.

Its function is as follows. Involved in iron-sulfur (Fe-S) cluster assembly. May act as a regulator of Fe-S biogenesis. The sequence is that of Iron-sulfur cluster assembly protein CyaY from Photobacterium profundum (strain SS9).